The primary structure comprises 399 residues: Argininosuccinate synthase (399 aa).

8–16 (AYSGGLDTS) serves as a coordination point for ATP. Tyr87 is an L-citrulline binding site. Residue Gly117 participates in ATP binding. L-aspartate-binding residues include Thr119, Asn123, and Asp124. Asn123 contributes to the L-citrulline binding site. L-citrulline-binding residues include Arg127, Ser175, Glu260, and Tyr272.

It belongs to the argininosuccinate synthase family. Type 1 subfamily. In terms of assembly, homotetramer.

It localises to the cytoplasm. The enzyme catalyses L-citrulline + L-aspartate + ATP = 2-(N(omega)-L-arginino)succinate + AMP + diphosphate + H(+). It functions in the pathway amino-acid biosynthesis; L-arginine biosynthesis; L-arginine from L-ornithine and carbamoyl phosphate: step 2/3. In Rhodococcus jostii (strain RHA1), this protein is Argininosuccinate synthase.